The chain runs to 321 residues: Phospho-N-acetylmuramoyl-pentapeptide-transferase (321 aa).

10 helical membrane passes run 6–26 (IFIP…LFIG), 54–74 (MGGV…GLFF), 77–97 (FTPS…LGYL), 117–137 (LIGQ…EGFS), 143–163 (FGVA…FWLV), 175–195 (IDGL…IIAW), 200–220 (FDVV…FPYN), 226–246 (IFMG…ISII), 251–271 (WTLL…ILQV), and 301–321 (IDFV…WILF).

The protein belongs to the glycosyltransferase 4 family. MraY subfamily. Mg(2+) serves as cofactor.

Its subcellular location is the cell membrane. The catalysed reaction is UDP-N-acetyl-alpha-D-muramoyl-L-alanyl-gamma-D-glutamyl-L-lysyl-D-alanyl-D-alanine + di-trans,octa-cis-undecaprenyl phosphate = Mur2Ac(oyl-L-Ala-gamma-D-Glu-L-Lys-D-Ala-D-Ala)-di-trans,octa-cis-undecaprenyl diphosphate + UMP. The protein operates within cell wall biogenesis; peptidoglycan biosynthesis. Functionally, catalyzes the initial step of the lipid cycle reactions in the biosynthesis of the cell wall peptidoglycan: transfers peptidoglycan precursor phospho-MurNAc-pentapeptide from UDP-MurNAc-pentapeptide onto the lipid carrier undecaprenyl phosphate, yielding undecaprenyl-pyrophosphoryl-MurNAc-pentapeptide, known as lipid I. In Enterococcus faecalis (strain ATCC 700802 / V583), this protein is Phospho-N-acetylmuramoyl-pentapeptide-transferase.